We begin with the raw amino-acid sequence, 291 residues long: ATP synthase gamma chain (291 aa).

It belongs to the ATPase gamma chain family. In terms of assembly, F-type ATPases have 2 components, CF(1) - the catalytic core - and CF(0) - the membrane proton channel. CF(1) has five subunits: alpha(3), beta(3), gamma(1), delta(1), epsilon(1). CF(0) has three main subunits: a, b and c.

The protein resides in the cell membrane. In terms of biological role, produces ATP from ADP in the presence of a proton gradient across the membrane. The gamma chain is believed to be important in regulating ATPase activity and the flow of protons through the CF(0) complex. The polypeptide is ATP synthase gamma chain (Streptococcus equi subsp. equi (strain 4047)).